Reading from the N-terminus, the 216-residue chain is Protein Syd (216 aa).

The protein belongs to the Syd family.

It localises to the cell inner membrane. Functionally, interacts with the SecY protein in vivo. May bind preferentially to an uncomplexed state of SecY, thus functioning either as a chelating agent for excess SecY in the cell or as a regulatory factor that negatively controls the translocase function. The sequence is that of Protein Syd from Shewanella baltica (strain OS185).